A 337-amino-acid polypeptide reads, in one-letter code: Phosphate acyltransferase (337 aa).

It belongs to the PlsX family. As to quaternary structure, homodimer. Probably interacts with PlsY.

Its subcellular location is the cytoplasm. It catalyses the reaction a fatty acyl-[ACP] + phosphate = an acyl phosphate + holo-[ACP]. It functions in the pathway lipid metabolism; phospholipid metabolism. Functionally, catalyzes the reversible formation of acyl-phosphate (acyl-PO(4)) from acyl-[acyl-carrier-protein] (acyl-ACP). This enzyme utilizes acyl-ACP as fatty acyl donor, but not acyl-CoA. The polypeptide is Phosphate acyltransferase (Acidobacterium capsulatum (strain ATCC 51196 / DSM 11244 / BCRC 80197 / JCM 7670 / NBRC 15755 / NCIMB 13165 / 161)).